Consider the following 240-residue polypeptide: Methylthioribulose-1-phosphate dehydratase (240 aa).

C99 is a binding site for substrate. Zn(2+)-binding residues include H116 and H118. The Proton donor/acceptor role is filled by E145. H201 lines the Zn(2+) pocket.

The protein belongs to the aldolase class II family. MtnB subfamily. Requires Zn(2+) as cofactor.

It is found in the cytoplasm. It carries out the reaction 5-(methylsulfanyl)-D-ribulose 1-phosphate = 5-methylsulfanyl-2,3-dioxopentyl phosphate + H2O. The protein operates within amino-acid biosynthesis; L-methionine biosynthesis via salvage pathway; L-methionine from S-methyl-5-thio-alpha-D-ribose 1-phosphate: step 2/6. Its function is as follows. Catalyzes the dehydration of methylthioribulose-1-phosphate (MTRu-1-P) into 2,3-diketo-5-methylthiopentyl-1-phosphate (DK-MTP-1-P). This chain is Methylthioribulose-1-phosphate dehydratase, found in Paracoccidioides lutzii (strain ATCC MYA-826 / Pb01) (Paracoccidioides brasiliensis).